We begin with the raw amino-acid sequence, 135 residues long: Transcriptional activator protein (135 aa).

The short motif at 17–32 (KIQHHIAKKRQVRRRR) is the Nuclear localization signal element. The segment at 37-54 (CGCSYYIHLDCINHGFTH) is a zinc-finger region. A transactivation region spans residues 120-135 (HLDDLTVSDWSFFKSL).

The protein belongs to the geminiviridae transcriptional activator protein family. As to quaternary structure, monomer. Homodimer. Homooligomer. Self-interaction correlates with nuclear localization and efficient activation of transcription. Monomers suppress local silencing by interacting with and inactivating host adenosine kinase 2 (ADK2) in the cytoplasm. Interacts with and inhibits host SNF1 kinase. Binds to ssDNA. May interact with host RPS27A. Phosphorylated.

Its subcellular location is the host nucleus. It localises to the host cytoplasm. Multifunctional protein that modulates host antiviral defenses and promotes host attractiveness to insect vectors. Acts as a suppressor of RNA-mediated gene silencing, also known as post-transcriptional gene silencing (PTGS), a mechanism of plant viral defense that limits the accumulation of viral RNAs. TrAP suppresses the host RNA silencing by inhibiting adenosine kinase 2 (ADK2), a kinase involved in a general methylation pathway. Also suppresses the host basal defense by interacting with and inhibiting SNF1 kinase, a key regulator of cell metabolism implicated in innate antiviral defense. In terms of biological role, inhibits signal transduction by the phytohormone jasmonate, making the infected plant more attractive to aphids, which are the second host to play a role as a dissemination vector. Acts by binding to ubiquitin precursor RPS27A, thereby preventing ubiquitin degradation of JAZ. The chain is Transcriptional activator protein from Tomato yellow leaf curl Sardinia virus (isolate Spain-1) (TYLCSV).